The sequence spans 709 residues: Dibasic-processing endoprotease (709 aa).

The first 22 residues, 1–22, serve as a signal peptide directing secretion; the sequence is MHPALLCGPILAIFLQFLVSSC. 2 consecutive propeptides follow at residues 23–82 and 83–102; these read SPLE…IRKR and GIDAGILELERQTPRWRYKR. Residues 103-668 lie on the Lumenal side of the membrane; that stretch reads DASESDELLN…QPVLEPSYRE (566 aa). A Peptidase S8 domain is found at 128–440; it reads QWHIFNSNNP…FGKLDASKFV (313 aa). The N-linked (GlcNAc...) asparagine glycan is linked to asparagine 155. Residues aspartate 162 and histidine 200 each act as charge relay system in the active site. 2 disulfide bridges follow: cysteine 216-cysteine 363 and cysteine 308-cysteine 338. Serine 371 functions as the Charge relay system in the catalytic mechanism. The region spanning 449-588 is the P/Homo B domain; the sequence is VNPQTWLIAP…QLALWGESEN (140 aa). N-linked (GlcNAc...) asparagine glycans are attached at residues asparagine 463, asparagine 471, and asparagine 620. A helical transmembrane segment spans residues 669 to 693; it reads IVAFITFFLLFAFIFVAVIWTWISA. The Cytoplasmic segment spans residues 694 to 709; sequence FWKAKAPPPLSQQEIA.

It belongs to the peptidase S8 family. Furin subfamily. Requires Ca(2+) as cofactor. N-glycosylated.

It is found in the golgi apparatus. It localises to the trans-Golgi network membrane. In terms of biological role, membrane-bound, subtilisin-like serine protease that processes the P-factor precursor and other precursor proteins. Essential for cell viability. Cleaves substrate on the C-terminal side of dibasic residues. This Schizosaccharomyces pombe (strain 972 / ATCC 24843) (Fission yeast) protein is Dibasic-processing endoprotease (krp1).